A 383-amino-acid chain; its full sequence is Chitinase-3-like protein 1 (383 aa).

Positions 1–21 (MGLRVAQTGFVALVLLQSCAA) are cleaved as a signal peptide. In terms of domain architecture, GH18 spans 22 to 383 (YKLVCYYTSW…SAIKDVLAAA (362 aa)). C26 and C51 are joined by a disulfide. N-linked (GlcNAc...) asparagine glycosylation occurs at N60. Chitin is bound by residues 70-71 (EW), 97-100 (GGWN), Y141, 204-207 (LTYD), and R263. The cysteines at positions 300 and 364 are disulfide-linked. Positions 324 to 338 (QWVGYDDQESVKNKA) are important for AKT1 activation and IL8 production. W352 provides a ligand contact to chitin.

This sequence belongs to the glycosyl hydrolase 18 family. As to quaternary structure, monomer. Detected in smooth muscle cells in atherosclerotic plaques. Detected in regions of vascular occlusion in the aorta.

It localises to the secreted. The protein resides in the extracellular space. The protein localises to the cytoplasm. Its subcellular location is the perinuclear region. It is found in the endoplasmic reticulum. Functionally, carbohydrate-binding lectin with a preference for chitin. Has no chitinase activity. May play a role in tissue remodeling and in the capacity of cells to respond to and cope with changes in their environment. Plays a role in T-helper cell type 2 (Th2) inflammatory response and IL-13-induced inflammation, regulating allergen sensitization, inflammatory cell apoptosis, dendritic cell accumulation and M2 macrophage differentiation. Facilitates invasion of pathogenic enteric bacteria into colonic mucosa and lymphoid organs. Mediates activation of AKT1 signaling pathway and subsequent IL8 production in colonic epithelial cells. Regulates antibacterial responses in lung by contributing to macrophage bacterial killing, controlling bacterial dissemination and augmenting host tolerance. Also regulates hyperoxia-induced injury, inflammation and epithelial apoptosis in lung. Stimulates migration and adhesion of cultured vascular smooth muscle cells. The sequence is that of Chitinase-3-like protein 1 (CHI3L1) from Sus scrofa (Pig).